The chain runs to 425 residues: Formyl-CoA:oxalate CoA-transferase (425 aa).

CoA-binding positions include 17 to 18, Arg-38, 72 to 75, 96 to 98, Arg-104, and 136 to 139; these read QS, LDTK, NFG, and KVYE. Asp-168 functions as the Nucleophile in the catalytic mechanism. A substrate-binding site is contributed by 247–249; sequence GGQ.

This sequence belongs to the CoA-transferase III family. Frc subfamily. In terms of assembly, homodimer.

It carries out the reaction formyl-CoA + oxalate = oxalyl-CoA + formate. It participates in metabolic intermediate degradation; oxalate degradation; CO(2) and formate from oxalate: step 1/2. Functionally, involved in the catabolism of oxalate and in the adapatation to low pH via the induction of the oxalate-dependent acid tolerance response (ATR). Catalyzes the transfer of the CoA moiety from formyl-CoA to oxalate. The sequence is that of Formyl-CoA:oxalate CoA-transferase from Bradyrhizobium sp. (strain ORS 278).